The primary structure comprises 142 residues: Large ribosomal subunit protein uL22 (142 aa).

Positions 122–142 (RAEAPEETKPSRGTNKEQKAA) are disordered.

Belongs to the universal ribosomal protein uL22 family. As to quaternary structure, part of the 50S ribosomal subunit.

This protein binds specifically to 23S rRNA; its binding is stimulated by other ribosomal proteins, e.g. L4, L17, and L20. It is important during the early stages of 50S assembly. It makes multiple contacts with different domains of the 23S rRNA in the assembled 50S subunit and ribosome. Its function is as follows. The globular domain of the protein is located near the polypeptide exit tunnel on the outside of the subunit, while an extended beta-hairpin is found that lines the wall of the exit tunnel in the center of the 70S ribosome. This chain is Large ribosomal subunit protein uL22, found in Gluconobacter oxydans (strain 621H) (Gluconobacter suboxydans).